The chain runs to 538 residues: MDSRELALASLMCDTGGPGELSVGHQQRRTKKWSFSLVVAALVGAFGSSFLYGYNLSVVNAPTPYIKAFYNGTWYRRHGQPIDPDTLTLLWSVTVSIFAIGGLVGTLMVKMIGKFLGRKSTLLVNNGFAISAALLMACSLRAGTFEMLIVGRFIMGVDGGIALSALPMYLNEISPKEIRGSLGQVTAIFICIGVFSGQLLGLPELLGRESTWPYLFGVIIVPALVQLASLPFLPESPRYLLFEKHDEAGAMKAFQTFLGKADVSQELEEALAESRVQRNLRLVSVLELLRAPFVRWQVITVIITMASYQLCGLNAIWFYTNSIFGKAGIPQDKIPYITLSTGGIETLAAIFSGLVIERLGRRPLLIGGFGLMALFFGTLTATLTLQDQAPWVPYLSIVCILAIIASFCSGPGGIPFILTGEFFQQSERPAAFMIAGTVNWLSNFAVGLLFPFIQKSLDSYCFLVFATICIAGATYFYFVLPETKNRTHAEISQAFAKRNKAQPPEVKADSAMTEEKANSQTEPDSSSTLDSYGQNKIV.

Residues 1–34 (MDSRELALASLMCDTGGPGELSVGHQQRRTKKWS) lie on the Cytoplasmic side of the membrane. Position 3 is a phosphoserine (S3). Residues 35-54 (FSLVVAALVGAFGSSFLYGY) traverse the membrane as a helical segment. 2 N-linked (GlcNAc...) asparagine glycosylation sites follow: N55 and N71. Over 55–88 (NLSVVNAPTPYIKAFYNGTWYRRHGQPIDPDTLT) the chain is Extracellular. The chain crosses the membrane as a helical span at residues 89–109 (LLWSVTVSIFAIGGLVGTLMV). At 110–120 (KMIGKFLGRKS) the chain is on the cytoplasmic side. A helical membrane pass occupies residues 121-143 (TLLVNNGFAISAALLMACSLRAG). At 144–148 (TFEML) the chain is on the extracellular side. The helical transmembrane segment at 149-170 (IVGRFIMGVDGGIALSALPMYL) threads the bilayer. Residues 171-181 (NEISPKEIRGS) lie on the Cytoplasmic side of the membrane. The helical transmembrane segment at 182-200 (LGQVTAIFICIGVFSGQLL) threads the bilayer. Topologically, residues 201–211 (GLPELLGREST) are extracellular. Residues 212 to 233 (WPYLFGVIIVPALVQLASLPFL) form a helical membrane-spanning segment. Residues 234–297 (PESPRYLLFE…LLRAPFVRWQ (64 aa)) lie on the Cytoplasmic side of the membrane. A helical transmembrane segment spans residues 298 to 319 (VITVIITMASYQLCGLNAIWFY). Over 320–333 (TNSIFGKAGIPQDK) the chain is Extracellular. A helical membrane pass occupies residues 334–356 (IPYITLSTGGIETLAAIFSGLVI). Topologically, residues 357-362 (ERLGRR) are cytoplasmic. The chain crosses the membrane as a helical span at residues 363 to 385 (PLLIGGFGLMALFFGTLTATLTL). Residues 386-390 (QDQAP) lie on the Extracellular side of the membrane. Residues 391–418 (WVPYLSIVCILAIIASFCSGPGGIPFIL) traverse the membrane as a helical segment. Topologically, residues 419–429 (TGEFFQQSERP) are cytoplasmic. Residues 430 to 453 (AAFMIAGTVNWLSNFAVGLLFPFI) traverse the membrane as a helical segment. At 454-458 (QKSLD) the chain is on the extracellular side. Residues 459–480 (SYCFLVFATICIAGATYFYFVL) traverse the membrane as a helical segment. The Cytoplasmic portion of the chain corresponds to 481–538 (PETKNRTHAEISQAFAKRNKAQPPEVKADSAMTEEKANSQTEPDSSSTLDSYGQNKIV). The segment at 495 to 538 (FAKRNKAQPPEVKADSAMTEEKANSQTEPDSSSTLDSYGQNKIV) is disordered. Positions 518 to 538 (NSQTEPDSSSTLDSYGQNKIV) are enriched in polar residues.

This sequence belongs to the major facilitator superfamily. Sugar transporter (TC 2.A.1.1) family. Post-translationally, N-glycosylated. In terms of tissue distribution, highly expressed in the intestine, with high expression in the jejunum and ileum, the segments of the intestine that perform the majority of urate excretion. Isoform 1: Widely expressed. Isoform 1: In kidney, expressed at low levels in proximal tubules. Isoform 2: Primarily expressed in liver and kidney; with specific expression in distal convoluted and connecting tubules of kidney.

The protein resides in the basolateral cell membrane. The protein localises to the apical cell membrane. The enzyme catalyses urate(out) = urate(in). In terms of biological role, high-capacity urate transporter, which may play a role in the urate reabsorption by proximal tubules. May have a residual high-affinity, low-capacity glucose and fructose transporter activity. Transports urate at rates 45- to 60-fold faster than glucose. Does not transport galactose. May mediate small uptake of adenine but not of other nucleobases. The protein is Solute carrier family 2, facilitated glucose transporter member 9 of Mus musculus (Mouse).